A 155-amino-acid chain; its full sequence is SsrA-binding protein (155 aa).

Residues 135–147 (TIKRRDQERDIKK) are compositionally biased toward basic and acidic residues. Residues 135–155 (TIKRRDQERDIKKQMKHYNAR) are disordered.

Belongs to the SmpB family.

It localises to the cytoplasm. In terms of biological role, required for rescue of stalled ribosomes mediated by trans-translation. Binds to transfer-messenger RNA (tmRNA), required for stable association of tmRNA with ribosomes. tmRNA and SmpB together mimic tRNA shape, replacing the anticodon stem-loop with SmpB. tmRNA is encoded by the ssrA gene; the 2 termini fold to resemble tRNA(Ala) and it encodes a 'tag peptide', a short internal open reading frame. During trans-translation Ala-aminoacylated tmRNA acts like a tRNA, entering the A-site of stalled ribosomes, displacing the stalled mRNA. The ribosome then switches to translate the ORF on the tmRNA; the nascent peptide is terminated with the 'tag peptide' encoded by the tmRNA and targeted for degradation. The ribosome is freed to recommence translation, which seems to be the essential function of trans-translation. This chain is SsrA-binding protein, found in Streptococcus pyogenes serotype M6 (strain ATCC BAA-946 / MGAS10394).